The sequence spans 154 residues: Myoglobin (154 aa).

A Globin domain is found at 2 to 148 (GLSDEEWKKV…FRNDMASRYK (147 aa)). His65 lines the nitrite pocket. His65 serves as a coordination point for O2. His94 provides a ligand contact to heme b.

Belongs to the globin family. As to quaternary structure, monomeric.

It localises to the cytoplasm. It is found in the sarcoplasm. It catalyses the reaction Fe(III)-heme b-[protein] + nitric oxide + H2O = Fe(II)-heme b-[protein] + nitrite + 2 H(+). It carries out the reaction H2O2 + AH2 = A + 2 H2O. In terms of biological role, monomeric heme protein which primary function is to store oxygen and facilitate its diffusion within muscle tissues. Reversibly binds oxygen through a pentacoordinated heme iron and enables its timely and efficient release as needed during periods of heightened demand. Depending on the oxidative conditions of tissues and cells, and in addition to its ability to bind oxygen, it also has a nitrite reductase activity whereby it regulates the production of bioactive nitric oxide. Under stress conditions, like hypoxia and anoxia, it also protects cells against reactive oxygen species thanks to its pseudoperoxidase activity. The polypeptide is Myoglobin (MB) (Varanus varius (Lace monitor lizard)).